Here is a 425-residue protein sequence, read N- to C-terminus: RNA-binding protein L (425 aa).

Over residues 1–20 (MQQPPSQPQPGMGGPPPPPQ) the composition is skewed to pro residues. Residues 1-82 (MQQPPSQPQP…AAPPPQAMPA (82 aa)) form a disordered region. A compositionally biased stretch (low complexity) spans 21–31 (GAAGQPPQWGA). Residues 32–80 (IPPPMPPHQYGAPPPQQPPAMWGQPPPQAHYGQVPPPQPYYAAPPPQAM) are compositionally biased toward pro residues. RRM domains follow at residues 90–170 (KTLW…WASA), 180–259 (YTIF…PAAN), and 284–356 (TTIF…WGRS).

This sequence belongs to the polyadenylate-binding RBP45 family. As to quaternary structure, interacts with RBP-P. Interacts with RAB5A.

It is found in the nucleus. The protein localises to the cytoplasm. RNA-binding protein that binds to a cis-localization element or zipcode, within the 5'-CDS of prolamine RNA. Binds strongly to glutelin and prolamin mRNAs, particularly to 3'-UTR and zipcode RNA. Recognizes and binds to glutelin zipcode RNA, which is required for proper mRNA localization to cisternal endoplasmic reticulum. Recognizes and binds to prolamin zipcode RNA, which is required for proper mRNA localization to the protein body endoplasmic reticulum that delimits the prolamine intracisternal inclusion granules. Required for the correct localization of glutelin and prolamine mRNA in endosperm cells during grain development. RBP-L and RBP-P form a quaternary complex with the membrane trafficking factors NSF and RAB5A. This quaternay complex carries glutelin mRNAs for active transport on endosomes to the cortical endoplasmic reticulum membrane, and enables endosome-mediated glutelin mRNA transport in endosperm cells. This is RNA-binding protein L from Oryza sativa subsp. japonica (Rice).